Reading from the N-terminus, the 984-residue chain is MORC family CW-type zinc finger protein 1 (984 aa).

The stretch at 284-353 (AFKDEVKKAE…RELKTARTLS (70 aa)) forms a coiled coil. The segment at 477 to 531 (AMGIPFIIQCDLCLKWRVLPSSTNYQEKEFFDIWICANNPNRLENSCHQVECLPS) adopts a CW-type zinc-finger fold. Zn(2+) contacts are provided by Cys486, Cys489, Cys512, and Cys523. 2 coiled-coil regions span residues 737–761 (DVSL…CNDV) and 900–934 (EISL…LQLG).

The protein localises to the nucleus. Functionally, required for spermatogenesis. Essential for de novo DNA methylation and silencing of transposable elements in the male embryonic germ cells. This Homo sapiens (Human) protein is MORC family CW-type zinc finger protein 1.